We begin with the raw amino-acid sequence, 159 residues long: MKIKVGFGFDVHQLVEGRELWLGGILLEHEKGLLGHSDADVLVHAICDALLGAANMRDIGYHFPDNAGEYKNIDSKILLKKTVELIAAKGYQIGNIDATICAERPKLKAHIPSMQQVLAEVMGIDADDISIKATTTEKLGFTGREEGISAYATVLINRV.

Residues Asp10 and His12 each contribute to the a divalent metal cation site. 4-CDP-2-C-methyl-D-erythritol 2-phosphate contacts are provided by residues 10–12 (DVH) and 36–37 (HS). His44 is an a divalent metal cation binding site. Residues 58–60 (DIG), 134–137 (TTTE), Phe141, and Arg144 each bind 4-CDP-2-C-methyl-D-erythritol 2-phosphate.

The protein belongs to the IspF family. Homotrimer. It depends on a divalent metal cation as a cofactor.

The catalysed reaction is 4-CDP-2-C-methyl-D-erythritol 2-phosphate = 2-C-methyl-D-erythritol 2,4-cyclic diphosphate + CMP. It functions in the pathway isoprenoid biosynthesis; isopentenyl diphosphate biosynthesis via DXP pathway; isopentenyl diphosphate from 1-deoxy-D-xylulose 5-phosphate: step 4/6. Functionally, involved in the biosynthesis of isopentenyl diphosphate (IPP) and dimethylallyl diphosphate (DMAPP), two major building blocks of isoprenoid compounds. Catalyzes the conversion of 4-diphosphocytidyl-2-C-methyl-D-erythritol 2-phosphate (CDP-ME2P) to 2-C-methyl-D-erythritol 2,4-cyclodiphosphate (ME-CPP) with a corresponding release of cytidine 5-monophosphate (CMP). In Bacteroides fragilis (strain YCH46), this protein is 2-C-methyl-D-erythritol 2,4-cyclodiphosphate synthase.